A 131-amino-acid chain; its full sequence is Putative pre-16S rRNA nuclease (131 aa).

This sequence belongs to the YqgF nuclease family.

It is found in the cytoplasm. Could be a nuclease involved in processing of the 5'-end of pre-16S rRNA. This is Putative pre-16S rRNA nuclease from Bordetella petrii (strain ATCC BAA-461 / DSM 12804 / CCUG 43448).